A 321-amino-acid chain; its full sequence is Tyrosine recombinase XerC (321 aa).

In terms of domain architecture, Core-binding (CB) spans 16-107 (PSIAQEMTRW…GLRSFGRFLE (92 aa)). The Tyr recombinase domain occupies 128–315 (SLPKPLPMAS…DSERLLEVYA (188 aa)). Active-site residues include Arg-173, Lys-199, His-267, Arg-270, and His-293. The active-site O-(3'-phospho-DNA)-tyrosine intermediate is Tyr-302.

The protein belongs to the 'phage' integrase family. XerC subfamily. In terms of assembly, forms a cyclic heterotetrameric complex composed of two molecules of XerC and two molecules of XerD.

The protein localises to the cytoplasm. Functionally, site-specific tyrosine recombinase, which acts by catalyzing the cutting and rejoining of the recombining DNA molecules. The XerC-XerD complex is essential to convert dimers of the bacterial chromosome into monomers to permit their segregation at cell division. It also contributes to the segregational stability of plasmids. The protein is Tyrosine recombinase XerC of Bradyrhizobium diazoefficiens (strain JCM 10833 / BCRC 13528 / IAM 13628 / NBRC 14792 / USDA 110).